We begin with the raw amino-acid sequence, 348 residues long: Isopentenyl-diphosphate delta-isomerase (348 aa).

11 to 12 (RK) contributes to the substrate binding site. FMN-binding positions include 70-72 (AMT), serine 100, and asparagine 131. 100–102 (SQR) contacts substrate. Glutamine 165 contributes to the substrate binding site. Glutamate 166 lines the Mg(2+) pocket. Residues lysine 197, threonine 231, 278-280 (GIR), and 299-300 (AR) each bind FMN.

The protein belongs to the IPP isomerase type 2 family. In terms of assembly, homooctamer. Dimer of tetramers. FMN serves as cofactor. NADPH is required as a cofactor. The cofactor is Mg(2+).

The protein resides in the cytoplasm. It catalyses the reaction isopentenyl diphosphate = dimethylallyl diphosphate. Functionally, involved in the biosynthesis of isoprenoids. Catalyzes the 1,3-allylic rearrangement of the homoallylic substrate isopentenyl (IPP) to its allylic isomer, dimethylallyl diphosphate (DMAPP). In Mycobacterium marinum (strain ATCC BAA-535 / M), this protein is Isopentenyl-diphosphate delta-isomerase.